The primary structure comprises 229 residues: 5'-methylthioadenosine/S-adenosylhomocysteine nucleosidase (229 aa).

Glu-12 (proton acceptor) is an active-site residue. Residues Gly-78, Ile-152, and 173 to 174 (ME) contribute to the substrate site. The active-site Proton donor is Asp-197.

The protein belongs to the PNP/UDP phosphorylase family. MtnN subfamily.

It carries out the reaction S-adenosyl-L-homocysteine + H2O = S-(5-deoxy-D-ribos-5-yl)-L-homocysteine + adenine. The catalysed reaction is S-methyl-5'-thioadenosine + H2O = 5-(methylsulfanyl)-D-ribose + adenine. It catalyses the reaction 5'-deoxyadenosine + H2O = 5-deoxy-D-ribose + adenine. It functions in the pathway amino-acid biosynthesis; L-methionine biosynthesis via salvage pathway; S-methyl-5-thio-alpha-D-ribose 1-phosphate from S-methyl-5'-thioadenosine (hydrolase route): step 1/2. Its function is as follows. Catalyzes the irreversible cleavage of the glycosidic bond in both 5'-methylthioadenosine (MTA) and S-adenosylhomocysteine (SAH/AdoHcy) to adenine and the corresponding thioribose, 5'-methylthioribose and S-ribosylhomocysteine, respectively. Also cleaves 5'-deoxyadenosine, a toxic by-product of radical S-adenosylmethionine (SAM) enzymes, into 5-deoxyribose and adenine. The sequence is that of 5'-methylthioadenosine/S-adenosylhomocysteine nucleosidase from Pasteurella multocida (strain Pm70).